The primary structure comprises 552 residues: Non-structural protein NS1 (552 aa).

The protein belongs to the orbivirus non-structural protein NS1 family.

This chain is Non-structural protein NS1 (Segment-5), found in Epizootic hemorrhagic disease virus 2 (strain Alberta) (EHDV-2).